Here is a 182-residue protein sequence, read N- to C-terminus: T-cell surface glycoprotein CD3 gamma chain (182 aa).

Residues 1-22 (MEQGKHLAGLILAITLLQGTMA) form the signal peptide. Residues 23-98 (QLKEGKHSVL…GSKENSKRLQ (76 aa)) form the Ig-like domain. Residues 23 to 116 (QLKEGKHSVL…CIELNSATVS (94 aa)) lie on the Extracellular side of the membrane. A disulfide bond links Cys-46 and Cys-87. An N-linked (GlcNAc...) asparagine glycan is attached at Asn-66. Residues 117 to 137 (GFIFTEIISLFFLAVGVYFIA) traverse the membrane as a helical segment. The Cytoplasmic segment spans residues 138-182 (GQDGVRQSRASDKQTLLSNDQLYQPLKDREDDQYSHLQGNNSRKN). Residue Ser-145 is modified to Phosphoserine. Residue Ser-148 is modified to Phosphoserine; by PKC. In terms of domain architecture, ITAM spans 149 to 177 (DKQTLLSNDQLYQPLKDREDDQYSHLQGN). The short motif at 153–154 (LL) is the Di-leucine motif element.

As to quaternary structure, the TCR-CD3 complex is composed of a CD3D/CD3E and a CD3G/CD3E heterodimers that preferentially associate with TCRalpha and TCRbeta, respectively, to form TCRalpha/CD3E/CD3G and TCRbeta/CD3G/CD3E trimers. In turn, the hexamer interacts with CD3Z homodimer to form the TCR-CD3 complex. Alternatively, TCRalpha and TCRbeta can be replaced by TCRgamma and TCRdelta. Post-translationally, phosphorylated on Tyr residues after T-cell receptor triggering by LCK in association with CD4/CD8. Phosphorylated also by PKC; leading to the TCR complex down-regulation. In terms of processing, phosphorylated on Tyr residues after T-cell receptor triggering by LCK in association with CD4/CD8.

It is found in the cell membrane. In terms of biological role, part of the TCR-CD3 complex present on T-lymphocyte cell surface that plays an essential role in adaptive immune response. When antigen presenting cells (APCs) activate T-cell receptor (TCR), TCR-mediated signals are transmitted across the cell membrane by the CD3 chains CD3D, CD3E, CD3G and CD3Z. All CD3 chains contain immunoreceptor tyrosine-based activation motifs (ITAMs) in their cytoplasmic domain. Upon TCR engagement, these motifs become phosphorylated by Src family protein tyrosine kinases LCK and FYN, resulting in the activation of downstream signaling pathways. In addition to this role of signal transduction in T-cell activation, CD3G plays an essential role in the dynamic regulation of TCR expression at the cell surface. Indeed, constitutive TCR cycling is dependent on the di-leucine-based (diL) receptor-sorting motif present in CD3G. This chain is T-cell surface glycoprotein CD3 gamma chain (CD3G), found in Sus scrofa (Pig).